Here is an 88-residue protein sequence, read N- to C-terminus: MAVKLRLTRLGSKRNPFYRIVAADARAPRDGRNIEQIGTYNPNNVNAAEVKIDEELALKWLKNGAKPTDTVHNILSREGILKKFDDQK.

It belongs to the bacterial ribosomal protein bS16 family.

This Staphylococcus saprophyticus subsp. saprophyticus (strain ATCC 15305 / DSM 20229 / NCIMB 8711 / NCTC 7292 / S-41) protein is Small ribosomal subunit protein bS16.